The primary structure comprises 301 residues: D-alanine--D-alanine ligase (301 aa).

One can recognise an ATP-grasp domain in the interval 102–295; the sequence is KAVFAAAGLP…FPALCAWMVE (194 aa). Residue 128–181 coordinates ATP; the sequence is PLPRPYVIKPVNEGSSVGVFILREGDNRRADIARAWRHGSVAMTEEYVPGRELT. Mg(2+) is bound by residues Asp248, Glu262, and Asn264.

This sequence belongs to the D-alanine--D-alanine ligase family. The cofactor is Mg(2+). Mn(2+) is required as a cofactor.

Its subcellular location is the cytoplasm. It catalyses the reaction 2 D-alanine + ATP = D-alanyl-D-alanine + ADP + phosphate + H(+). Its pathway is cell wall biogenesis; peptidoglycan biosynthesis. Functionally, cell wall formation. The sequence is that of D-alanine--D-alanine ligase from Acidiphilium cryptum (strain JF-5).